A 408-amino-acid chain; its full sequence is ATP phosphoribosyltransferase regulatory subunit (408 aa).

It belongs to the class-II aminoacyl-tRNA synthetase family. HisZ subfamily. As to quaternary structure, heteromultimer composed of HisG and HisZ subunits.

Its subcellular location is the cytoplasm. The protein operates within amino-acid biosynthesis; L-histidine biosynthesis; L-histidine from 5-phospho-alpha-D-ribose 1-diphosphate: step 1/9. Required for the first step of histidine biosynthesis. May allow the feedback regulation of ATP phosphoribosyltransferase activity by histidine. In Thermosynechococcus vestitus (strain NIES-2133 / IAM M-273 / BP-1), this protein is ATP phosphoribosyltransferase regulatory subunit.